The sequence spans 767 residues: Slo-interacting protein 1 (767 aa).

The PDZ domain occupies 202-280 (QQSSTDTNKG…SVTLLVSRIL (79 aa)). Disordered stretches follow at residues 521-557 (GNAA…NPDE) and 744-767 (KEER…QQQQ). Positions 532–555 (NSSSAYNTGDSNNSASPHQNTTNP) are enriched in polar residues. Over residues 744–755 (KEERKRHIERAR) the composition is skewed to basic and acidic residues.

As to quaternary structure, interacts with Slo. In embryos, it is expressed throughout the CNS and in several peripheral locations. Colocalizes with Slo.

In terms of biological role, may selectively reduce calcium-activated potassium channel (Slo) currents by reducing the number of Slo channels in the plasma membrane. This Drosophila melanogaster (Fruit fly) protein is Slo-interacting protein 1 (Slip1).